We begin with the raw amino-acid sequence, 400 residues long: Subtilisin-like protease 7 (400 aa).

Residues 1 to 20 (MGFITKAIPLALAAASVING) form the signal peptide. A propeptide spanning residues 21-119 (AEILETRAGV…IERDARVQIN (99 aa)) is cleaved from the precursor. In terms of domain architecture, Inhibitor I9 spans 36–118 (KYIVVMNDGI…YIERDARVQI (83 aa)). Residues 129 to 400 (SWGLARVGSK…SKLINNGSGM (272 aa)) form the Peptidase S8 domain. Residues Asp-161 and His-192 each act as charge relay system in the active site. Residue Asn-252 is glycosylated (N-linked (GlcNAc...) asparagine). Ser-346 (charge relay system) is an active-site residue. Residue Asn-396 is glycosylated (N-linked (GlcNAc...) asparagine).

Belongs to the peptidase S8 family.

It is found in the secreted. In terms of biological role, secreted subtilisin-like serine protease with keratinolytic activity that contributes to pathogenicity. This is Subtilisin-like protease 7 (SUB7) from Trichophyton violaceum.